The following is an 85-amino-acid chain: Toxin BmKAEP (85 aa).

The first 21 residues, 1 to 21 (MKLFLLLVISASMLIDGLVNA), serve as a signal peptide directing secretion. An LCN-type CS-alpha/beta domain is found at 22–82 (DGYIRGSNGC…TWKSESNTCG (61 aa)). Disulfide bonds link cysteine 31-cysteine 81, cysteine 35-cysteine 56, cysteine 42-cysteine 63, and cysteine 46-cysteine 65. Glycine 82 is modified (glycine amide).

As to expression, expressed by the venom gland.

The protein resides in the secreted. Shows anti-epileptic activity. Shares high homology with depressant insect toxins, but shows very weak toxicity against mammals and insects and no obvious symptoms on insect larvae. May target voltage-gated sodium channel (Nav). This chain is Toxin BmKAEP, found in Olivierus martensii (Manchurian scorpion).